The sequence spans 1064 residues: Carbamoyl phosphate synthase large chain (1064 aa).

The interval 1-401 (MPKRNDIKKI…SLLKAVRSLE (401 aa)) is carboxyphosphate synthetic domain. ATP is bound by residues Arg-129, Arg-169, Gly-175, Gly-176, Glu-208, Ile-210, Glu-215, Gly-241, Val-242, His-243, Gln-284, and Glu-298. Residues 133-327 (KELCERIGEP…IAKMSAKIAI (195 aa)) enclose the ATP-grasp 1 domain. Residues Gln-284, Glu-298, and Asn-300 each contribute to the Mg(2+) site. Residues Gln-284, Glu-298, and Asn-300 each contribute to the Mn(2+) site. An oligomerization domain region spans residues 402–546 (IGVFHNDLQE…YSTYEWENES (145 aa)). Positions 547–929 (KRSSKEKIIV…ALYKSFEAAK (383 aa)) are carbamoyl phosphate synthetic domain. The region spanning 671 to 861 (EKALQDLEIP…MAQLATQMIL (191 aa)) is the ATP-grasp 2 domain. Arg-707, Ser-746, Leu-748, Glu-752, Gly-777, Val-778, His-779, Ser-780, Gln-820, and Glu-832 together coordinate ATP. The Mg(2+) site is built by Gln-820, Glu-832, and Asn-834. Mn(2+)-binding residues include Gln-820, Glu-832, and Asn-834. The MGS-like domain occupies 930 to 1064 (LHMADYGSVL…QSRSFTTKNI (135 aa)). Residues 930–1064 (LHMADYGSVL…QSRSFTTKNI (135 aa)) are allosteric domain.

It belongs to the CarB family. As to quaternary structure, composed of two chains; the small (or glutamine) chain promotes the hydrolysis of glutamine to ammonia, which is used by the large (or ammonia) chain to synthesize carbamoyl phosphate. Tetramer of heterodimers (alpha,beta)4. Requires Mg(2+) as cofactor. It depends on Mn(2+) as a cofactor.

The catalysed reaction is hydrogencarbonate + L-glutamine + 2 ATP + H2O = carbamoyl phosphate + L-glutamate + 2 ADP + phosphate + 2 H(+). It catalyses the reaction hydrogencarbonate + NH4(+) + 2 ATP = carbamoyl phosphate + 2 ADP + phosphate + 2 H(+). The protein operates within amino-acid biosynthesis; L-arginine biosynthesis; carbamoyl phosphate from bicarbonate: step 1/1. Its pathway is pyrimidine metabolism; UMP biosynthesis via de novo pathway; (S)-dihydroorotate from bicarbonate: step 1/3. Functionally, large subunit of the glutamine-dependent carbamoyl phosphate synthetase (CPSase). CPSase catalyzes the formation of carbamoyl phosphate from the ammonia moiety of glutamine, carbonate, and phosphate donated by ATP, constituting the first step of 2 biosynthetic pathways, one leading to arginine and/or urea and the other to pyrimidine nucleotides. The large subunit (synthetase) binds the substrates ammonia (free or transferred from glutamine from the small subunit), hydrogencarbonate and ATP and carries out an ATP-coupled ligase reaction, activating hydrogencarbonate by forming carboxy phosphate which reacts with ammonia to form carbamoyl phosphate. In Lactococcus lactis subsp. lactis (strain IL1403) (Streptococcus lactis), this protein is Carbamoyl phosphate synthase large chain.